Consider the following 214-residue polypeptide: Imidazole glycerol phosphate synthase subunit HisH (214 aa).

Residues 3 to 211 (TIAVIDYDMG…VSKVIPKNLA (209 aa)) form the Glutamine amidotransferase type-1 domain. Catalysis depends on Cys-81, which acts as the Nucleophile. Active-site residues include His-186 and Glu-188.

As to quaternary structure, heterodimer of HisH and HisF.

It is found in the cytoplasm. It carries out the reaction 5-[(5-phospho-1-deoxy-D-ribulos-1-ylimino)methylamino]-1-(5-phospho-beta-D-ribosyl)imidazole-4-carboxamide + L-glutamine = D-erythro-1-(imidazol-4-yl)glycerol 3-phosphate + 5-amino-1-(5-phospho-beta-D-ribosyl)imidazole-4-carboxamide + L-glutamate + H(+). The catalysed reaction is L-glutamine + H2O = L-glutamate + NH4(+). Its pathway is amino-acid biosynthesis; L-histidine biosynthesis; L-histidine from 5-phospho-alpha-D-ribose 1-diphosphate: step 5/9. Functionally, IGPS catalyzes the conversion of PRFAR and glutamine to IGP, AICAR and glutamate. The HisH subunit catalyzes the hydrolysis of glutamine to glutamate and ammonia as part of the synthesis of IGP and AICAR. The resulting ammonia molecule is channeled to the active site of HisF. The protein is Imidazole glycerol phosphate synthase subunit HisH of Trichodesmium erythraeum (strain IMS101).